Here is a 98-residue protein sequence, read N- to C-terminus: Putative pterin-4-alpha-carbinolamine dehydratase (98 aa).

Belongs to the pterin-4-alpha-carbinolamine dehydratase family.

It catalyses the reaction (4aS,6R)-4a-hydroxy-L-erythro-5,6,7,8-tetrahydrobiopterin = (6R)-L-erythro-6,7-dihydrobiopterin + H2O. The chain is Putative pterin-4-alpha-carbinolamine dehydratase from Roseobacter denitrificans (strain ATCC 33942 / OCh 114) (Erythrobacter sp. (strain OCh 114)).